The chain runs to 174 residues: Solute carrier family 2, facilitated glucose transporter member 4 (174 aa).

Over 1–19 (QQIGSEDGEPPQQRVTGTL) the chain is Cytoplasmic. An interaction with SRFBP1 region spans residues 2 to 8 (QIGSEDG). Position 5 is a phosphoserine (Ser5). A helical transmembrane segment spans residues 20–40 (VLAVFSAVLGSLQFGYNIGVI). Over 41–76 (NAPQKVIEQSYNETWLGRQGPNGPGSIPPGTLTTLW) the chain is Extracellular. A glycan (N-linked (GlcNAc...) asparagine) is linked at Asn52. The chain crosses the membrane as a helical span at residues 77 to 97 (ALSVAIFSVGGMFSSFLLGII). Over 98–114 (SQWLGRKKAMLFNNTLA) the chain is Cytoplasmic. Residues 115–135 (VLAGALMGLAKAAASYEMLIL) traverse the membrane as a helical segment. The Extracellular portion of the chain corresponds to 136 to 137 (GR). A helical transmembrane segment spans residues 138 to 158 (FLIGAYSGLASGLVPMYVGEI). Topologically, residues 159–166 (APTHLRGA) are cytoplasmic. A helical transmembrane segment spans residues 167–174 (LGTLNQLA).

The protein belongs to the major facilitator superfamily. Sugar transporter (TC 2.A.1.1) family. Glucose transporter subfamily. Binds to DAXX. Interacts via its N-terminus with SRFBP1. Interacts with NDUFA9. Interacts with TRARG1; the interaction is required for proper SLC2A4 recycling after insulin stimulation. In terms of processing, sumoylated. Palmitoylated. Palmitoylation by ZDHHC7 controls the insulin-dependent translocation of GLUT4 to the plasma membrane.

It is found in the cell membrane. The protein localises to the endomembrane system. The protein resides in the cytoplasm. It localises to the perinuclear region. The catalysed reaction is D-glucose(out) = D-glucose(in). Insulin-regulated facilitative glucose transporter, which plays a key role in removal of glucose from circulation. Response to insulin is regulated by its intracellular localization: in the absence of insulin, it is efficiently retained intracellularly within storage compartments in muscle and fat cells. Upon insulin stimulation, translocates from these compartments to the cell surface where it transports glucose from the extracellular milieu into the cell. The chain is Solute carrier family 2, facilitated glucose transporter member 4 from Sus scrofa (Pig).